The chain runs to 1367 residues: Insulin-like growth factor 1 receptor (1367 aa).

A signal peptide spans Met-1–Gly-30. Cys-33 and Cys-52 are joined by a disulfide. Residues Asn-51, Asn-102, and Asn-135 are each glycosylated (N-linked (GlcNAc...) asparagine). Intrachain disulfides connect Cys-150-Cys-178, Cys-182-Cys-205, Cys-192-Cys-211, Cys-215-Cys-224, Cys-219-Cys-230, Cys-231-Cys-239, Cys-235-Cys-248, Cys-251-Cys-260, Cys-264-Cys-276, Cys-282-Cys-303, Cys-307-Cys-321, Cys-324-Cys-328, and Cys-332-Cys-353. The N-linked (GlcNAc...) asparagine glycan is linked to Asn-244. Asn-314 carries N-linked (GlcNAc...) asparagine glycosylation. 2 N-linked (GlcNAc...) asparagine glycosylation sites follow: Asn-417 and Asn-438. The cysteines at positions 455 and 488 are disulfide-linked. Fibronectin type-III domains follow at residues Asp-491–Ser-609, Val-610–Glu-708, Pro-735–Ala-828, and Ile-834–Lys-927. 9 N-linked (GlcNAc...) asparagine glycosylation sites follow: Asn-534, Asn-607, Asn-622, Asn-640, Asn-747, Asn-756, Asn-764, Asn-900, and Asn-913. Over Asp-741 to His-935 the chain is Extracellular. The helical transmembrane segment at Leu-936–His-959 threads the bilayer. Over Arg-960 to Cys-1367 the chain is Cytoplasmic. Positions Asn-977 to Tyr-980 match the IRS1- and SHC1-binding motif. Tyr-980 is modified (phosphotyrosine). The Protein kinase domain maps to Ile-999–Phe-1274. ATP is bound by residues Leu-1005–Val-1013 and Lys-1033. The active-site Proton acceptor is the Asp-1135. Tyr-1161, Tyr-1165, and Tyr-1166 each carry phosphotyrosine; by autocatalysis. Glycyl lysine isopeptide (Lys-Gly) (interchain with G-Cter in ubiquitin) cross-links involve residues Lys-1168 and Lys-1171. Ser-1278 carries the phosphoserine; by GSK3-beta modification. Ser-1282 bears the Phosphoserine mark. Positions Pro-1288–Cys-1367 are disordered. Acidic residues predominate over residues Pro-1290–Asn-1299. Residues Met-1300–Leu-1316 show a composition bias toward low complexity. Basic and acidic residues predominate over residues Pro-1317–Glu-1326.

The protein belongs to the protein kinase superfamily. Tyr protein kinase family. Insulin receptor subfamily. Tetramer of 2 alpha and 2 beta chains linked by disulfide bonds. The alpha chains contribute to the formation of the ligand-binding domain, while the beta chain carries the kinase domain. Interacts with PIK3R1 and with the PTB/PID domains of IRS1 and SHC1 in vitro when autophosphorylated on tyrosine residues. Forms a hybrid receptor with INSR, the hybrid is a tetramer consisting of 1 alpha chain and 1 beta chain of INSR and 1 alpha chain and 1 beta chain of IGF1R. Interacts with ARRB1 and ARRB2. Interacts with GRB10. Interacts with RACK1. Interacts with SOCS1, SOCS2 and SOCS3. Interacts with 14-3-3 proteins. Interacts with NMD2. Interacts with MAP3K5. Interacts with STAT3. Found in a ternary complex with IGF1 and ITGAV:ITGB3 or ITGA6:ITGB4. Interacts (nascent precursor form) with ZFAND2B. As to quaternary structure, (Microbial infection) Interacts with human respiratory syncytial virus (HRSV) fusion glycoprotein F1/F2 heterodimer. Post-translationally, autophosphorylated on tyrosine residues in response to ligand binding. Autophosphorylation occurs in trans, i.e. one subunit of the dimeric receptor phosphorylates tyrosine residues on the other subunit. Autophosphorylation occurs in a sequential manner; Tyr-1165 is predominantly phosphorylated first, followed by phosphorylation of Tyr-1161 and Tyr-1166. While every single phosphorylation increases kinase activity, all three tyrosine residues in the kinase activation loop (Tyr-1165, Tyr-1161 and Tyr-1166) have to be phosphorylated for optimal activity. Can be autophosphorylated at additional tyrosine residues (in vitro). Autophosphorylated is followed by phosphorylation of juxtamembrane tyrosines and C-terminal serines. May also be phosphorylated at Tyr-1161 and Tyr-1166 by mTORC2. Phosphorylation of Tyr-980 is required for IRS1- and SHC1-binding. Phosphorylation of Ser-1278 by GSK-3beta restrains kinase activity and promotes cell surface expression, it requires a priming phosphorylation at Ser-1282. Dephosphorylated by PTPN1. Polyubiquitinated at Lys-1168 and Lys-1171 through both 'Lys-48' and 'Lys-29' linkages, promoting receptor endocytosis and subsequent degradation by the proteasome. Ubiquitination is facilitated by pre-existing phosphorylation. In terms of processing, sumoylated with SUMO1. Post-translationally, controlled by regulated intramembrane proteolysis (RIP). Undergoes metalloprotease-dependent constitutive ectodomain shedding to produce a membrane-anchored 52 kDa C-Terminal fragment which is further processed by presenilin gamma-secretase to yield an intracellular 50 kDa fragment. In terms of tissue distribution, found as a hybrid receptor with INSR in muscle, heart, kidney, adipose tissue, skeletal muscle, hepatoma, fibroblasts, spleen and placenta (at protein level). Expressed in a variety of tissues. Overexpressed in tumors, including melanomas, cancers of the colon, pancreas prostate and kidney.

It is found in the cell membrane. It catalyses the reaction L-tyrosyl-[protein] + ATP = O-phospho-L-tyrosyl-[protein] + ADP + H(+). Activated by autophosphorylation at Tyr-1165, Tyr-1161 and Tyr-1166 on the kinase activation loop; phosphorylation at all three tyrosine residues is required for optimal kinase activity. Inhibited by MSC1609119A-1, BMS-754807, PQIP, benzimidazole pyridinone, isoquinolinedione, bis-azaindole, 3-cyanoquinoline, 2,4-bis-arylamino-1,3-pyrimidine, pyrrolopyrimidine, pyrrole-5-carboxaldehyde, picropodophyllin (PPP), tyrphostin derivatives. While most inhibitors bind to the ATP binding pocket, MSC1609119A-1 functions as allosteric inhibitor and binds close to the DFG motif and the activation loop. In terms of biological role, receptor tyrosine kinase which mediates actions of insulin-like growth factor 1 (IGF1). Binds IGF1 with high affinity and IGF2 and insulin (INS) with a lower affinity. The activated IGF1R is involved in cell growth and survival control. IGF1R is crucial for tumor transformation and survival of malignant cell. Ligand binding activates the receptor kinase, leading to receptor autophosphorylation, and tyrosines phosphorylation of multiple substrates, that function as signaling adapter proteins including, the insulin-receptor substrates (IRS1/2), Shc and 14-3-3 proteins. Phosphorylation of IRSs proteins lead to the activation of two main signaling pathways: the PI3K-AKT/PKB pathway and the Ras-MAPK pathway. The result of activating the MAPK pathway is increased cellular proliferation, whereas activating the PI3K pathway inhibits apoptosis and stimulates protein synthesis. Phosphorylated IRS1 can activate the 85 kDa regulatory subunit of PI3K (PIK3R1), leading to activation of several downstream substrates, including protein AKT/PKB. AKT phosphorylation, in turn, enhances protein synthesis through mTOR activation and triggers the antiapoptotic effects of IGFIR through phosphorylation and inactivation of BAD. In parallel to PI3K-driven signaling, recruitment of Grb2/SOS by phosphorylated IRS1 or Shc leads to recruitment of Ras and activation of the ras-MAPK pathway. In addition to these two main signaling pathways IGF1R signals also through the Janus kinase/signal transducer and activator of transcription pathway (JAK/STAT). Phosphorylation of JAK proteins can lead to phosphorylation/activation of signal transducers and activators of transcription (STAT) proteins. In particular activation of STAT3, may be essential for the transforming activity of IGF1R. The JAK/STAT pathway activates gene transcription and may be responsible for the transforming activity. JNK kinases can also be activated by the IGF1R. IGF1 exerts inhibiting activities on JNK activation via phosphorylation and inhibition of MAP3K5/ASK1, which is able to directly associate with the IGF1R. Its function is as follows. When present in a hybrid receptor with INSR, binds IGF1. PubMed:12138094 shows that hybrid receptors composed of IGF1R and INSR isoform Long are activated with a high affinity by IGF1, with low affinity by IGF2 and not significantly activated by insulin, and that hybrid receptors composed of IGF1R and INSR isoform Short are activated by IGF1, IGF2 and insulin. In contrast, PubMed:16831875 shows that hybrid receptors composed of IGF1R and INSR isoform Long and hybrid receptors composed of IGF1R and INSR isoform Short have similar binding characteristics, both bind IGF1 and have a low affinity for insulin. This chain is Insulin-like growth factor 1 receptor (IGF1R), found in Homo sapiens (Human).